Here is a 465-residue protein sequence, read N- to C-terminus: Iron transporter FTH1 (465 aa).

Topologically, residues 1-11 (MAFEDYFSFQI) are vacuolar. A helical membrane pass occupies residues 12–32 (FFIFLRESLEIVVIVSILLTI). Over 33-135 (VKQGLSVEDD…LYQKLKIQIL (103 aa)) the chain is Cytoplasmic. The disordered stretch occupies residues 44 to 66 (PFEGSSSSAGLPSPNTNTNADST). The span at 46–66 (EGSSSSAGLPSPNTNTNADST) shows a compositional bias: polar residues. The chain crosses the membrane as a helical span at residues 136 to 156 (AGGAFGLLLCMLIGGAFVSIF). Over 157–170 (YHIGTDLWTLSEHY) the chain is Vacuolar. A helical membrane pass occupies residues 171 to 191 (YEGVLSLVASVIISVMGLFFL). Topologically, residues 192-289 (RMGKLREKFR…FFFRYSSSLS (98 aa)) are cytoplasmic. The chain crosses the membrane as a helical span at residues 290–310 (LKICLVVATCFLYLIAAGLFS). Topologically, residues 311–358 (KGVWQLELQDYVNKCNGQDMSEVGNGPGSYDISRSVWHVNCCNGEKDG) are vacuolar. A helical transmembrane segment spans residues 359-379 (GWMIFTAIFGWTNSATVGSVI). Residues 380–465 (SYNAYWLVLI…LIIDSSGSAN (86 aa)) lie on the Cytoplasmic side of the membrane. The segment at 433–465 (TSELNSSTSEPDSQRRSKDSSVPLIIDSSGSAN) is disordered. A phosphoserine mark is found at Ser-449 and Ser-453.

This sequence belongs to the oxidase-dependent Fe transporter (OFeT) (TC 9.A.10.1) family. Interacts with FET5.

It localises to the vacuole membrane. In terms of biological role, high affinity iron transporter probably involved in transport of intravacuolar stores of iron. The sequence is that of Iron transporter FTH1 (FTH1) from Saccharomyces cerevisiae (strain ATCC 204508 / S288c) (Baker's yeast).